The primary structure comprises 67 residues: Alpha-toxin Tf3 (67 aa).

The LCN-type CS-alpha/beta domain occupies 2 to 63; the sequence is KDGYPVEGDN…EPTKTNGRCK (62 aa). Cystine bridges form between Cys-12-Cys-62, Cys-16-Cys-38, Cys-24-Cys-45, and Cys-28-Cys-47. Proline amide is present on Pro-64.

It belongs to the long (4 C-C) scorpion toxin superfamily. Sodium channel inhibitor family. Alpha subfamily. Expressed by the venom gland.

It is found in the secreted. Alpha toxins bind voltage-independently at site-3 of sodium channels (Nav) and inhibit the inactivation of the activated channels, thereby blocking neuronal transmission. This is Alpha-toxin Tf3 from Tityus fasciolatus (Central Brazilian scorpion).